A 554-amino-acid polypeptide reads, in one-letter code: U4/U6 small nuclear ribonucleoprotein PRP4-like protein (554 aa).

Over residues 48–65 (APIPMMPHPPVARPPTFR) the composition is skewed to pro residues. Residues 48-99 (APIPMMPHPPVARPPTFRPPVSQNGGVKTSDSDSESDDEHIEISEESKQVRE) are disordered. A compositionally biased stretch (basic and acidic residues) spans 88 to 99 (IEISEESKQVRE). WD repeat units lie at residues 253-292 (GDDR…NTIA), 296-335 (DHKE…LQTF), 337-376 (GHLD…ELLL), 379-418 (GHSR…SILV), 421-460 (GHIK…SLYI), 463-503 (AHAN…LVKS), and 506-545 (GHES…DEDE).

The protein resides in the nucleus speckle. Participates in pre-mRNA splicing. Part of the U4/U5/U6 tri-snRNP complex, one of the building blocks of the spliceosome. Essential for reproduction. In female gametophyte, is necessary for the egg cell and central cell fate determination and hence reproductive success. Involved in a mechanism that prevents accessory cells from adopting gametic cell fate. Modulates egg cell signaling center that regulates the development of all female gametophytic cells. The protein is U4/U6 small nuclear ribonucleoprotein PRP4-like protein of Arabidopsis thaliana (Mouse-ear cress).